A 541-amino-acid chain; its full sequence is Transmembrane protein 87A (541 aa).

Positions 1 to 26 (MAAASFQPLKCLLLWVFFVITPPVKA) are cleaved as a signal peptide. The Lumenal portion of the chain corresponds to 27–209 (VPEPGIWTVP…HGFISASDWP (183 aa)). Residues Asn52, Asn109, Asn148, and Asn189 are each glycosylated (N-linked (GlcNAc...) asparagine). 2 disulfides stabilise this stretch: Cys65–Cys116 and Cys82–Cys416. The chain crosses the membrane as a helical span at residues 210 to 230 (LMIFYMVMCIMYILLALLWFI). The Cytoplasmic portion of the chain corresponds to 231–241 (WSACYWKDLLR). A helical transmembrane segment spans residues 242–262 (IQFWIAAVIFLGMLEKAVYYA). At 263–293 (EYQNTDNTGVSSHGLLIFAELISSIKRTLAR) the chain is on the lumenal side. Residues 294 to 314 (LLVTIVSLGYGIIKPRLGAVM) traverse the membrane as a helical segment. Residues 315 to 316 (HR) are Cytoplasmic-facing. Residues 317–337 (VVGMGVLYFVFAAVEGVMRII) traverse the membrane as a helical segment. The Lumenal portion of the chain corresponds to 338-344 (GAKEYDL). A helical transmembrane segment spans residues 345-365 (VLLAGIPLALLDSGLCWWIFV). The Cytoplasmic segment spans residues 366–384 (SLAQTMKTLKLRKNTVKYS). Residues 385–405 (LYRHFTNTLIFAILASIIFMI) traverse the membrane as a helical segment. At 406 to 422 (WRTKKFQLVDCQADWME) the chain is on the lumenal side. The helical transmembrane segment at 423–443 (LWVDDAYWRFLFFIILLVIMF) threads the bilayer. Residues 444–541 (LWRPSANNQR…MTKYEMSKIE (98 aa)) lie on the Cytoplasmic side of the membrane.

Belongs to the LU7TM family. TMEM87 subfamily.

The protein resides in the cell membrane. It localises to the golgi apparatus membrane. Its function is as follows. Potential monoatomic ion channel gated by mechanical force, implicated in normal touch sensitivity through the generation of mechanically activated currents. However, a direct channel activity is debated and an alternative could be that it functions as a chaperone for an unidentified mechanosensitive ion channel. Could also be involved in cell mechanosensitivity regulating cell adhesion and migration. May also be involved in retrograde transport from endosomes to the trans-Golgi network (TGN). In Xenopus tropicalis (Western clawed frog), this protein is Transmembrane protein 87A.